Consider the following 480-residue polypeptide: MQITIERKPLGQIEADALIVPVFEGRRDARFGAEDLFASGEVAGKALEMTLLHHAPGVRATRVLLVGAGAAGKFDAAGMRRLSGAAVRFLKAKSVKKIALVLDSEFSGSNFASAAVEGALLGNFEPDRYKTGNEKKSLDTFIVAGDTPELESAVARGRILAEAQNFSRDLVNEPANLLTPLGMADAARKMAAEFGLECEVLDRDAMQKLGMGSLLGVAIGSAEPPVLIVLRYRPAKSEGAAHLGLVGKGVTFDTGGISIKPADGMEKMKYDMAGGAAMIGAMRAIAQLKPAIPVSAYIPAVENMPGSRAQRPGDIVTAMNGKTIEVINTDAEGRLILADALTYARRQGCTHLVDAATLTGAVVVALGHLNVGLFANDDAMRDRVLAAAKDEGERMWSLPLEDDYKEYLKSGFADIANVGGRWGGAITAAIFLKEFAEETPWVHLDIAGTAWLDENKPYLAKGPTGLPVRTLARLAMDWKA.

Mn(2+) contacts are provided by K248 and D253. Residue K260 is part of the active site. The Mn(2+) site is built by D271, D330, and E332. Residue R334 is part of the active site.

The protein belongs to the peptidase M17 family. Requires Mn(2+) as cofactor.

It is found in the cytoplasm. The catalysed reaction is Release of an N-terminal amino acid, Xaa-|-Yaa-, in which Xaa is preferably Leu, but may be other amino acids including Pro although not Arg or Lys, and Yaa may be Pro. Amino acid amides and methyl esters are also readily hydrolyzed, but rates on arylamides are exceedingly low.. It carries out the reaction Release of an N-terminal amino acid, preferentially leucine, but not glutamic or aspartic acids.. Presumably involved in the processing and regular turnover of intracellular proteins. Catalyzes the removal of unsubstituted N-terminal amino acids from various peptides. The chain is Probable cytosol aminopeptidase from Solibacter usitatus (strain Ellin6076).